Reading from the N-terminus, the 348-residue chain is MTAPSQVLKIRRPDDWHLHLRDGDMLKTVVPYTSEIYGRAIVMPNLAPPVTTVEAAVAYRQRILDAVPAGHDFTPLMTCYLTDSLDPNELERGFNEGVFTAAKLYPANATTNSSHGVTSIDAIMPVLERMEKIGMPLLVHGEVTHADIDIFDREARFIESVMEPLRQRLTALKVVFEHITTKDAADYVRDGNERLAATITPQHLMFNRNHMLVGGVRPHLYCLPILKRNIHQQALRELVASGFNRVFLGTDSAPHARHRKESSCGCAGCFSAPTALGSYATVFEEMNALQHFEAFCSVNGPQFYGLPVNDTFIELVREEQQVAESIALTDDTLVPFLAGETVRWSVKQ.

The Zn(2+) site is built by His-17 and His-19. Residues 19-21 (HLR) and Asn-45 each bind substrate. Positions 103, 140, and 178 each coordinate Zn(2+). Lys-103 carries the post-translational modification N6-carboxylysine. His-140 contacts substrate. Residue Leu-223 participates in substrate binding. Asp-251 is a binding site for Zn(2+). The active site involves Asp-251. Positions 255 and 267 each coordinate substrate.

Belongs to the metallo-dependent hydrolases superfamily. DHOase family. Class II DHOase subfamily. In terms of assembly, homodimer. Zn(2+) serves as cofactor.

The enzyme catalyses (S)-dihydroorotate + H2O = N-carbamoyl-L-aspartate + H(+). Its pathway is pyrimidine metabolism; UMP biosynthesis via de novo pathway; (S)-dihydroorotate from bicarbonate: step 3/3. Catalyzes the reversible cyclization of carbamoyl aspartate to dihydroorotate. This Shigella dysenteriae serotype 1 (strain Sd197) protein is Dihydroorotase.